The following is an 882-amino-acid chain: DNA mismatch repair protein MutS (882 aa).

Residue 640–647 coordinates ATP; the sequence is GPNMGGKS.

Belongs to the DNA mismatch repair MutS family.

This protein is involved in the repair of mismatches in DNA. It is possible that it carries out the mismatch recognition step. This protein has a weak ATPase activity. The protein is DNA mismatch repair protein MutS of Albidiferax ferrireducens (strain ATCC BAA-621 / DSM 15236 / T118) (Rhodoferax ferrireducens).